A 328-amino-acid polypeptide reads, in one-letter code: Alcohol-sensitive RING finger protein 1 (328 aa).

An RING-type 1; atypical zinc finger spans residues 18–61 (CSICWESMPSGVGRLMPCGHEYHLACIRKWFHLHSGNRSCPVCR). The RING-type 2; atypical zinc finger occupies 129-177 (CGICGEMNGDIDTCCNRCHHMYHHSCLGQLLVEVNAEREQGWSHCIFCY).

The protein localises to the cytoplasm. The protein resides in the nucleus. Functionally, required for tolerance to alcohol. In Eremothecium gossypii (strain ATCC 10895 / CBS 109.51 / FGSC 9923 / NRRL Y-1056) (Yeast), this protein is Alcohol-sensitive RING finger protein 1 (ASR1).